The sequence spans 273 residues: Alcohol dehydrogenase-related 31 kDa protein (273 aa).

An NAD(+)-binding site is contributed by 11–34 (YVADCGGIALETCKVLMTKNIAKL). S139 provides a ligand contact to substrate. Catalysis depends on Y152, which acts as the Proton acceptor.

It belongs to the short-chain dehydrogenases/reductases (SDR) family.

This Drosophila immigrans (Fruit fly) protein is Alcohol dehydrogenase-related 31 kDa protein (Adhr).